A 158-amino-acid chain; its full sequence is NAD(P)H-quinone oxidoreductase subunit J, chloroplastic (158 aa).

Belongs to the complex I 30 kDa subunit family. As to quaternary structure, NDH is composed of at least 16 different subunits, 5 of which are encoded in the nucleus.

The protein resides in the plastid. Its subcellular location is the chloroplast thylakoid membrane. The catalysed reaction is a plastoquinone + NADH + (n+1) H(+)(in) = a plastoquinol + NAD(+) + n H(+)(out). It carries out the reaction a plastoquinone + NADPH + (n+1) H(+)(in) = a plastoquinol + NADP(+) + n H(+)(out). In terms of biological role, NDH shuttles electrons from NAD(P)H:plastoquinone, via FMN and iron-sulfur (Fe-S) centers, to quinones in the photosynthetic chain and possibly in a chloroplast respiratory chain. The immediate electron acceptor for the enzyme in this species is believed to be plastoquinone. Couples the redox reaction to proton translocation, and thus conserves the redox energy in a proton gradient. The chain is NAD(P)H-quinone oxidoreductase subunit J, chloroplastic from Capsella bursa-pastoris (Shepherd's purse).